The sequence spans 989 residues: Translation initiation factor IF-2 (989 aa).

Disordered regions lie at residues 28-60 (GVTK…TDAD) and 97-397 (VRRD…DQNT). Composition is skewed to basic and acidic residues over residues 40-60 (ETDK…TDAD) and 122-178 (ELQR…EAAK). A compositionally biased stretch (low complexity) spans 182 to 223 (AAAAEAAAREQQTQASKPAQAAQPAAAKAEPVAAKAAEPVVA). A compositionally biased stretch (basic and acidic residues) spans 231–280 (ERAAAERAAQREAAKKAEDAARQAAEKARAEQEEIAKRRAAAEAEARAIR). Low complexity predominate over residues 318–345 (RPAGEAPARPAAKKPAAAAPAATTTPSA). Over residues 374–387 (TSGGVDRGWRGGPK) the composition is skewed to gly residues. The tr-type G domain occupies 489 to 658 (PRPPVVTVMG…LLQAEVLELK (170 aa)). The G1 stretch occupies residues 498–505 (GHVDHGKT). A GTP-binding site is contributed by 498 to 505 (GHVDHGKT). Positions 523 to 527 (GITQH) are G2. The interval 544–547 (DTPG) is G3. GTP contacts are provided by residues 544–548 (DTPGH) and 598–601 (NKID). The segment at 598-601 (NKID) is G4. Residues 634–636 (SAK) are G5.

It belongs to the TRAFAC class translation factor GTPase superfamily. Classic translation factor GTPase family. IF-2 subfamily.

Its subcellular location is the cytoplasm. In terms of biological role, one of the essential components for the initiation of protein synthesis. Protects formylmethionyl-tRNA from spontaneous hydrolysis and promotes its binding to the 30S ribosomal subunits. Also involved in the hydrolysis of GTP during the formation of the 70S ribosomal complex. This is Translation initiation factor IF-2 from Paraburkholderia xenovorans (strain LB400).